The primary structure comprises 417 residues: Calreticulin (417 aa).

Positions 1-17 (MLLPVPLLLGLLGLAAA) are cleaved as a signal peptide. Residues 18 to 197 (DPTVYFKEQF…NSQVESGSLE (180 aa)) form an N-domain region. A Ca(2+)-binding site is contributed by Gln26. Lys48 is modified (N6-acetyllysine). Lys62 and Lys64 together coordinate Ca(2+). Lys64 is modified (N6-(2-hydroxyisobutyryl)lysine). The an alpha-D-glucoside site is built by Tyr109, Lys111, Tyr128, and Asp135. Cys137 and Cys163 are disulfide-bonded. At Lys159 the chain carries N6-acetyllysine. Asn179 carries N-linked (GlcNAc...) asparagine glycosylation. One copy of the 1-1 repeat lies at 191 to 202 (VESGSLEDDWDF). Positions 191-255 (VESGSLEDDW…DAKKPEDWDE (65 aa)) are 4 X approximate repeats. A disordered region spans residues 193–270 (SGSLEDDWDF…WEPPVIQNPE (78 aa)). The P-domain stretch occupies residues 198 to 308 (DDWDFLPPKK…YSPDSNIYAY (111 aa)). The segment covering 207-251 (KIKDPDAAKPEDWDDRAKIDDPTDSKPEDWDKPEHIPDPDAKKPE) has biased composition (basic and acidic residues). Lys209 carries the N6-acetyllysine modification. Tandem repeats lie at residues 210–221 (DPDAAKPEDWDD), 227–238 (DPTDSKPEDWDK), 244–255 (DPDAKKPEDWDE), 259–269 (GEWEPPVIQNP), 273–283 (GEWKPRQIDNP), and 287–297 (GIWIHPEIDNP). An interaction with PPIB region spans residues 237-270 (DKPEHIPDPDAKKPEDWDEEMDGEWEPPVIQNPE). Acidic residues predominate over residues 252–261 (DWDEEMDGEW). Residues 259-297 (GEWEPPVIQNPEYKGEWKPRQIDNPEYKGIWIHPEIDNP) form a 3 X approximate repeats region. Positions 309 to 417 (ENFAVLGLDL…AAAGQAKDEL (109 aa)) are C-domain. Asp317 is a binding site for an alpha-D-glucoside. Residue Asp328 coordinates Ca(2+). Residues 350 to 417 (TKAAEKQMKD…AAAGQAKDEL (68 aa)) are disordered. Residues 352-378 (AAEKQMKDKQDEEQRLHEEEEEKKGKE) are compositionally biased toward basic and acidic residues. Residues 379–408 (EEEADKDDDEDKDEDEEDEDEKEEEEEEDA) show a composition bias toward acidic residues. The short motif at 414 to 417 (KDEL) is the Prevents secretion from ER element.

Belongs to the calreticulin family. Monomer. Component of an EIF2 complex at least composed of CELF1/CUGBP1, CALR, CALR3, EIF2S1, EIF2S2, HSP90B1 and HSPA5. Interacts with PDIA3/ERp57 and SPACA9. Interacts with TRIM21. Interacts with NR3C1. Interacts with PPIB. Interacts (via P-domain) with PDIA5. Interacts with GABARAP. Interacts with CLCC1.

It is found in the endoplasmic reticulum lumen. The protein resides in the cytoplasm. It localises to the cytosol. The protein localises to the secreted. Its subcellular location is the extracellular space. It is found in the extracellular matrix. The protein resides in the cell surface. It localises to the sarcoplasmic reticulum lumen. The protein localises to the cytoplasmic vesicle. Its subcellular location is the secretory vesicle. It is found in the cortical granule. The protein resides in the cytolytic granule. Its function is as follows. Calcium-binding chaperone that promotes folding, oligomeric assembly and quality control in the endoplasmic reticulum (ER) via the calreticulin/calnexin cycle. This lectin interacts transiently with almost all of the monoglucosylated glycoproteins that are synthesized in the ER. Interacts with the DNA-binding domain of NR3C1 and mediates its nuclear export. Involved in maternal gene expression regulation. May participate in oocyte maturation via the regulation of calcium homeostasis. Present in the cortical granules of non-activated oocytes, is exocytosed during the cortical reaction in response to oocyte activation and might participate in the block to polyspermy. The sequence is that of Calreticulin (CALR) from Bos taurus (Bovine).